We begin with the raw amino-acid sequence, 213 residues long: 2-dehydro-3-deoxy-phosphogluconate aldolase (213 aa).

The active-site Proton acceptor is the glutamate 45. Pyruvate-binding residues include arginine 49, threonine 73, and lysine 133. Lysine 133 acts as the Schiff-base intermediate with substrate in catalysis.

This sequence belongs to the KHG/KDPG aldolase family. As to quaternary structure, homotrimer.

It localises to the cytoplasm. It carries out the reaction 2-dehydro-3-deoxy-6-phospho-D-gluconate = D-glyceraldehyde 3-phosphate + pyruvate. The protein operates within carbohydrate acid metabolism; 2-dehydro-3-deoxy-D-gluconate degradation; D-glyceraldehyde 3-phosphate and pyruvate from 2-dehydro-3-deoxy-D-gluconate: step 2/2. Its function is as follows. Involved in the degradation of glucose via the Entner-Doudoroff pathway. Catalyzes the reversible, stereospecific retro-aldol cleavage of 2-keto-3-deoxy-6-phosphogluconate (KDPG) to pyruvate and D-glyceraldehyde-3-phosphate. The chain is 2-dehydro-3-deoxy-phosphogluconate aldolase (eda) from Dickeya dadantii (strain 3937) (Erwinia chrysanthemi (strain 3937)).